A 78-amino-acid polypeptide reads, in one-letter code: Omega-conotoxin-like 2 (78 aa).

The signal sequence occupies residues 1 to 22 (MKLTCVVIVAVLLLTACQLITA). Positions 23-42 (DDSRGTQKHRSLRSTTKVSK) are excised as a propeptide. 3 disulfides stabilise this stretch: cysteine 46-cysteine 62, cysteine 53-cysteine 65, and cysteine 61-cysteine 72.

Belongs to the conotoxin O1 superfamily. As to expression, expressed by the venom duct.

The protein resides in the secreted. Functionally, omega-conotoxins act at presynaptic membranes, they bind and block voltage-gated calcium channels (Cav). In Conus striatus (Striated cone), this protein is Omega-conotoxin-like 2.